Here is a 138-residue protein sequence, read N- to C-terminus: Holo-[acyl-carrier-protein] synthase (138 aa).

Residues D8 and E60 each contribute to the Mg(2+) site.

This sequence belongs to the P-Pant transferase superfamily. AcpS family. Mg(2+) is required as a cofactor.

The protein localises to the cytoplasm. It carries out the reaction apo-[ACP] + CoA = holo-[ACP] + adenosine 3',5'-bisphosphate + H(+). Functionally, transfers the 4'-phosphopantetheine moiety from coenzyme A to a Ser of acyl-carrier-protein. This chain is Holo-[acyl-carrier-protein] synthase, found in Magnetococcus marinus (strain ATCC BAA-1437 / JCM 17883 / MC-1).